The sequence spans 184 residues: Fanconi anemia core complex-associated protein 20 (184 aa).

Disordered stretches follow at residues 1 to 30 and 46 to 81; these read MEEE…PWFL and TVGG…TVPP. Residues 7–16 show a composition bias toward basic residues; it reads LRGRLSRRRP. The span at 47–57 shows a compositional bias: polar residues; the sequence is VGGNTDWTPNS. At Ser-119 the chain carries Phosphoserine. The UBZ2-type zinc finger occupies 148-184; the sequence is LLNCPLCQKAFDPKLTQLDVDSHLAQCLAESTEDVVW. Zn(2+)-binding residues include Cys-151, Cys-154, His-170, and Cys-174.

In terms of assembly, component of the Fanconi anemia (FA) complex. Interacts with FANCA; interaction is direct. Interacts with REV1.

It localises to the nucleus. It is found in the chromosome. Functionally, component of the Fanconi anemia (FA) complex required to recruit the FA complex to DNA interstrand cross-links (ICLs) and promote ICLs repair. Following DNA damage recognizes and binds 'Lys-63'-linked ubiquitin generated by RNF8 at ICLs and recruits other components of the FA complex. Promotes translesion synthesis via interaction with REV1. This chain is Fanconi anemia core complex-associated protein 20, found in Rattus norvegicus (Rat).